The chain runs to 196 residues: Calcineurin B homologous protein 2 (196 aa).

Residue G2 is the site of N-myristoyl glycine attachment. 4 EF-hand domains span residues 26–61 (ASLL…AVNP), 71–106 (FPDG…PKKP), 111–146 (SRRN…MVGV), and 152–187 (QLEN…MDVE). At S27 the chain carries Phosphoserine. Ca(2+) is bound by residues D124, D126, D128, K130, and E135. Positions 137–148 (LQVLRLMVGVQV) match the Nuclear export signal motif. D165, D167, D169, and E176 together coordinate Ca(2+).

This sequence belongs to the calcineurin regulatory subunit family. CHP subfamily. In terms of assembly, interacts with PPP3CA. Interacts with SLC9A1/NHE1; the interaction occurs in a calcium-dependent manner. Expressed in malignantly transformed cells but not detected in normal tissues.

Its subcellular location is the nucleus. It localises to the cytoplasm. It is found in the cell membrane. Functions as an integral cofactor in cell pH regulation by controlling plasma membrane-type Na(+)/H(+) exchange activity. Binds to and activates SLC9A1/NHE1 in a serum-independent manner, thus increasing pH and protecting cells from serum deprivation-induced death. Also plays a role in the regulation of cell proliferation and tumor growth by increasing the phosphatase activity of PPP3CA in a calcium-dependent manner. Activator of the calcineurin/NFAT signaling pathway. Involved in the cytoplasmic translocation of the transcription factor NFATC3 to the nucleus. This chain is Calcineurin B homologous protein 2 (CHP2), found in Homo sapiens (Human).